A 128-amino-acid polypeptide reads, in one-letter code: Leucine-rich single-pass membrane protein 1 (128 aa).

Ser-24 carries the post-translational modification Phosphoserine. Residues 66–86 (GLLLVLTVSLALVFFAIFLII) traverse the membrane as a helical segment. Positions 90–111 (NQMEDVSRRLTAEGKDIDDLKK) form a coiled coil.

The protein resides in the membrane. This Mus musculus (Mouse) protein is Leucine-rich single-pass membrane protein 1 (Lsmem1).